The following is a 598-amino-acid chain: Aspartate--tRNA(Asp/Asn) ligase (598 aa).

Position 182 (glutamate 182) interacts with L-aspartate. The aspartate stretch occupies residues glutamine 206 to lysine 209. Arginine 228 serves as a coordination point for L-aspartate. ATP-binding positions include arginine 228–glutamate 230 and glutamine 237. Position 456 (histidine 456) interacts with L-aspartate. An ATP-binding site is contributed by glutamate 490. An L-aspartate-binding site is contributed by arginine 497. Residue glycine 542–arginine 545 coordinates ATP.

It belongs to the class-II aminoacyl-tRNA synthetase family. Type 1 subfamily. As to quaternary structure, homodimer.

It is found in the cytoplasm. The catalysed reaction is tRNA(Asx) + L-aspartate + ATP = L-aspartyl-tRNA(Asx) + AMP + diphosphate. Its function is as follows. Aspartyl-tRNA synthetase with relaxed tRNA specificity since it is able to aspartylate not only its cognate tRNA(Asp) but also tRNA(Asn). Reaction proceeds in two steps: L-aspartate is first activated by ATP to form Asp-AMP and then transferred to the acceptor end of tRNA(Asp/Asn). In Lachnoclostridium phytofermentans (strain ATCC 700394 / DSM 18823 / ISDg) (Clostridium phytofermentans), this protein is Aspartate--tRNA(Asp/Asn) ligase.